The primary structure comprises 145 residues: ATP synthase epsilon chain (145 aa).

Belongs to the ATPase epsilon chain family. In terms of assembly, F-type ATPases have 2 components, CF(1) - the catalytic core - and CF(0) - the membrane proton channel. CF(1) has five subunits: alpha(3), beta(3), gamma(1), delta(1), epsilon(1). CF(0) has three main subunits: a, b and c.

The protein localises to the cell inner membrane. In terms of biological role, produces ATP from ADP in the presence of a proton gradient across the membrane. This is ATP synthase epsilon chain from Francisella tularensis subsp. tularensis (strain FSC 198).